The chain runs to 128 residues: Large ribosomal subunit protein bL19 (128 aa).

It belongs to the bacterial ribosomal protein bL19 family.

Its function is as follows. This protein is located at the 30S-50S ribosomal subunit interface and may play a role in the structure and function of the aminoacyl-tRNA binding site. The sequence is that of Large ribosomal subunit protein bL19 from Bradyrhizobium sp. (strain ORS 278).